Consider the following 361-residue polypeptide: Alanine racemase (361 aa).

Lys35 serves as the catalytic Proton acceptor; specific for D-alanine. Lys35 carries the N6-(pyridoxal phosphate)lysine modification. Arg132 lines the substrate pocket. Tyr257 functions as the Proton acceptor; specific for L-alanine in the catalytic mechanism. Met305 contributes to the substrate binding site.

The protein belongs to the alanine racemase family. It depends on pyridoxal 5'-phosphate as a cofactor.

It catalyses the reaction L-alanine = D-alanine. Its pathway is amino-acid biosynthesis; D-alanine biosynthesis; D-alanine from L-alanine: step 1/1. Its function is as follows. Catalyzes the interconversion of L-alanine and D-alanine. May also act on other amino acids. This is Alanine racemase (alr) from Thioalkalivibrio sulfidiphilus (strain HL-EbGR7).